The sequence spans 171 residues: Dual specificity protein phosphatase OPG106 (171 aa).

One can recognise a Tyrosine-protein phosphatase domain in the interval 23-171; sequence SPTIMTRVTN…IIEKYVIDKN (149 aa). The Phosphocysteine intermediate role is filled by Cys-110.

It belongs to the protein-tyrosine phosphatase family. Non-receptor class dual specificity subfamily. In terms of assembly, homodimer.

Its subcellular location is the virion. It localises to the host cytoplasm. It carries out the reaction O-phospho-L-tyrosyl-[protein] + H2O = L-tyrosyl-[protein] + phosphate. It catalyses the reaction O-phospho-L-seryl-[protein] + H2O = L-seryl-[protein] + phosphate. Functionally, serine/tyrosine phosphatase which down-regulates cellular antiviral response by dephosphorylating activated host STAT1 and blocking interferon (IFN)-stimulated innate immune responses. Dephosphorylates the OPG144 protein. The protein is Dual specificity protein phosphatase OPG106 (OPG106) of Homo sapiens (Human).